The following is a 405-amino-acid chain: Cellobiose 2-epimerase (405 aa).

It belongs to the cellobiose 2-epimerase family.

It catalyses the reaction D-cellobiose = beta-D-glucosyl-(1-&gt;4)-D-mannopyranose. Functionally, catalyzes the reversible epimerization of cellobiose to 4-O-beta-D-glucopyranosyl-D-mannose (Glc-Man). Can also epimerize lactose to epilactose. The sequence is that of Cellobiose 2-epimerase (ce13) from Eubacterium cellulosolvens.